Consider the following 463-residue polypeptide: L-seryl-tRNA(Sec) selenium transferase (463 aa).

K295 is subject to N6-(pyridoxal phosphate)lysine.

It belongs to the SelA family. Homodecamer; pentamer of dimers. Binds only one seryl-tRNA(Sec) per dimer. Pyridoxal 5'-phosphate is required as a cofactor.

Its subcellular location is the cytoplasm. The catalysed reaction is L-seryl-tRNA(Sec) + selenophosphate + H(+) = L-selenocysteinyl-tRNA(Sec) + phosphate. Its pathway is aminoacyl-tRNA biosynthesis; selenocysteinyl-tRNA(Sec) biosynthesis; selenocysteinyl-tRNA(Sec) from L-seryl-tRNA(Sec) (bacterial route): step 1/1. In terms of biological role, converts seryl-tRNA(Sec) to selenocysteinyl-tRNA(Sec) required for selenoprotein biosynthesis. The chain is L-seryl-tRNA(Sec) selenium transferase from Salmonella dublin (strain CT_02021853).